A 381-amino-acid chain; its full sequence is E3 ubiquitin-protein ligase RNF34 (381 aa).

An FYVE-type zinc finger spans residues Glu56–Glu107. An SAP 1 domain is found at Leu115–Thr134. The residue at position 169 (Ser169) is a Phosphoserine. The interval Leu216 to Arg261 is disordered. The segment covering Thr221–Glu249 has biased composition (acidic residues). Phosphoserine occurs at positions 263 and 265. In terms of domain architecture, SAP 2 spans Val273–Arg287. Residues Cys334–Arg369 form an RING-type zinc finger.

In terms of assembly, interacts with CASP8 and CASP10. Interacts with p53/TP53; involved in p53/TP53 ubiquitination. Interacts (via RING-type zinc finger) with MDM2; the interaction stabilizes MDM2. Interacts (via RING-type zinc finger) with PPARGC1A. Interacts with NOD1. In terms of processing, proteolytically cleaved by caspases upon induction of apoptosis by TNF. Post-translationally, autoubiquitinated (in vitro). Ubiquitous. Detected in brain, cerebellum, midbrain, hippocampus, striatum, heart, lung, kidney, muscle, spleen and testis.

It localises to the cell membrane. Its subcellular location is the endomembrane system. The protein resides in the nucleus. The protein localises to the nucleus speckle. It is found in the cytoplasm. It localises to the cytosol. It carries out the reaction S-ubiquitinyl-[E2 ubiquitin-conjugating enzyme]-L-cysteine + [acceptor protein]-L-lysine = [E2 ubiquitin-conjugating enzyme]-L-cysteine + N(6)-ubiquitinyl-[acceptor protein]-L-lysine.. Its pathway is protein modification; protein ubiquitination. E3 ubiquitin-protein ligase that regulates several biological processes through the ubiquitin-mediated proteasomal degradation of various target proteins. Ubiquitinates the caspases CASP8 and CASP10, promoting their proteasomal degradation, to negatively regulate cell death downstream of death domain receptors in the extrinsic pathway of apoptosis. May mediate 'Lys-48'-linked polyubiquitination of RIPK1 and its subsequent proteasomal degradation thereby indirectly regulating the tumor necrosis factor-mediated signaling pathway. Negatively regulates p53/TP53 through its direct ubiquitination and targeting to proteasomal degradation. Indirectly, may also negatively regulate p53/TP53 through ubiquitination and degradation of SFN. Mediates PPARGC1A proteasomal degradation probably through ubiquitination thereby indirectly regulating the metabolism of brown fat cells. Possibly involved in innate immunity, through 'Lys-48'-linked polyubiquitination of NOD1 and its subsequent proteasomal degradation. The protein is E3 ubiquitin-protein ligase RNF34 of Rattus norvegicus (Rat).